The sequence spans 349 residues: Soluble TNF receptor II (349 aa).

An N-terminal signal peptide occupies residues 1-19 (MKSVLYSYILFLSCIIING). 2 TNFR-Cys repeats span residues 31–65 (KCKD…NTQC) and 67–108 (PCGS…NRIC). 6 disulfide bridges follow: Cys-32-Cys-43, Cys-44-Cys-57, Cys-47-Cys-65, Cys-68-Cys-83, Cys-86-Cys-100, and Cys-90-Cys-108. 3 N-linked (GlcNAc...) asparagine; by host glycosylation sites follow: Asn-101, Asn-189, and Asn-248.

Belongs to the orthopoxvirus OPG002 family.

In terms of biological role, inhibits host immune defense by binding to host TNF and various chemokines in the extracellular space. Binds host CC chemokines (beta chemokines) and CXC chemokines (alpha chemokines). This chain is Soluble TNF receptor II (OPG002), found in Camelus.